The primary structure comprises 61 residues: UPF0434 protein Nmul_A1027 (61 aa).

The protein belongs to the UPF0434 family.

The chain is UPF0434 protein Nmul_A1027 from Nitrosospira multiformis (strain ATCC 25196 / NCIMB 11849 / C 71).